A 121-amino-acid chain; its full sequence is Flagellar hook-basal body complex protein FliE (121 aa).

The protein belongs to the FliE family.

The protein resides in the bacterial flagellum basal body. The sequence is that of Flagellar hook-basal body complex protein FliE from Treponema denticola (strain ATCC 35405 / DSM 14222 / CIP 103919 / JCM 8153 / KCTC 15104).